The sequence spans 312 residues: Serine/threonine-protein phosphatase PP2A catalytic subunit (312 aa).

Residues Asp-60, His-62, Asp-88, and Asn-120 each contribute to the Mn(2+) site. The Proton donor role is filled by His-121. Mn(2+) contacts are provided by His-170 and His-244.

The protein belongs to the PPP phosphatase family. PP-2A subfamily. The cofactor is Mn(2+).

It localises to the cytoplasm. The enzyme catalyses O-phospho-L-seryl-[protein] + H2O = L-seryl-[protein] + phosphate. The catalysed reaction is O-phospho-L-threonyl-[protein] + H2O = L-threonyl-[protein] + phosphate. The sequence is that of Serine/threonine-protein phosphatase PP2A catalytic subunit from Nicotiana tabacum (Common tobacco).